The following is a 333-amino-acid chain: Adenosine deaminase (333 aa).

Residues H12 and H14 each contribute to the Zn(2+) site. Substrate-binding residues include H14, D16, and G170. H197 lines the Zn(2+) pocket. E200 acts as the Proton donor in catalysis. Residue D278 coordinates Zn(2+). D279 is a substrate binding site.

It belongs to the metallo-dependent hydrolases superfamily. Adenosine and AMP deaminases family. Adenosine deaminase subfamily. The cofactor is Zn(2+).

The catalysed reaction is adenosine + H2O + H(+) = inosine + NH4(+). The enzyme catalyses 2'-deoxyadenosine + H2O + H(+) = 2'-deoxyinosine + NH4(+). Catalyzes the hydrolytic deamination of adenosine and 2-deoxyadenosine. This Shigella sonnei (strain Ss046) protein is Adenosine deaminase.